Here is a 424-residue protein sequence, read N- to C-terminus: CinA-like protein (424 aa).

Belongs to the CinA family.

The sequence is that of CinA-like protein from Shewanella denitrificans (strain OS217 / ATCC BAA-1090 / DSM 15013).